The chain runs to 123 residues: MHELSIAHSLVEIAEEAAAKAGVARVTVVHLRLGTLSGVVRDALLFGFDVASAGTRLEGARLEIEEVPLQVYCETCDTVVALPDVRYFRCPQCGAACRRIVTGQEIELAALEYEDDTPEATAS.

H2 is a binding site for Ni(2+). Zn(2+)-binding residues include C73, C76, C90, and C93.

This sequence belongs to the HypA/HybF family.

Involved in the maturation of [NiFe] hydrogenases. Required for nickel insertion into the metal center of the hydrogenase. This is Hydrogenase maturation factor HypA from Roseiflexus sp. (strain RS-1).